A 72-amino-acid chain; its full sequence is Translation initiation factor IF-1 (72 aa).

Residues 1 to 72 (MAKDDVIEVE…NRGRITYRFK (72 aa)) enclose the S1-like domain. Y60 is modified (phosphotyrosine).

It belongs to the IF-1 family. As to quaternary structure, component of the 30S ribosomal translation pre-initiation complex which assembles on the 30S ribosome in the order IF-2 and IF-3, IF-1 and N-formylmethionyl-tRNA(fMet); mRNA recruitment can occur at any time during PIC assembly.

It localises to the cytoplasm. Functionally, one of the essential components for the initiation of protein synthesis. Stabilizes the binding of IF-2 and IF-3 on the 30S subunit to which N-formylmethionyl-tRNA(fMet) subsequently binds. Helps modulate mRNA selection, yielding the 30S pre-initiation complex (PIC). Upon addition of the 50S ribosomal subunit IF-1, IF-2 and IF-3 are released leaving the mature 70S translation initiation complex. The chain is Translation initiation factor IF-1 from Bacillus thuringiensis (strain Al Hakam).